The chain runs to 414 residues: L-cysteine:1D-myo-inositol 2-amino-2-deoxy-alpha-D-glucopyranoside ligase (414 aa).

Cysteine 44 serves as a coordination point for Zn(2+). L-cysteinyl-5'-AMP is bound by residues 44-47 (CGIT), threonine 59, and 82-84 (NIT). The 'HIGH' region motif lies at 46 to 56 (ITPYDSTHLGH). Positions 188–193 (ERGGDP) match the 'ERGGDP' region motif. Tryptophan 228 serves as a coordination point for L-cysteinyl-5'-AMP. Cysteine 232 is a binding site for Zn(2+). Position 250 to 252 (250 to 252 (GSD)) interacts with L-cysteinyl-5'-AMP. Histidine 257 lines the Zn(2+) pocket. Isoleucine 284 lines the L-cysteinyl-5'-AMP pocket. A 'KMSKS' region motif is present at residues 290 to 294 (KMSKS).

It belongs to the class-I aminoacyl-tRNA synthetase family. MshC subfamily. Monomer. The cofactor is Zn(2+).

It catalyses the reaction 1D-myo-inositol 2-amino-2-deoxy-alpha-D-glucopyranoside + L-cysteine + ATP = 1D-myo-inositol 2-(L-cysteinylamino)-2-deoxy-alpha-D-glucopyranoside + AMP + diphosphate + H(+). Catalyzes the ATP-dependent condensation of GlcN-Ins and L-cysteine to form L-Cys-GlcN-Ins. In Corynebacterium diphtheriae (strain ATCC 700971 / NCTC 13129 / Biotype gravis), this protein is L-cysteine:1D-myo-inositol 2-amino-2-deoxy-alpha-D-glucopyranoside ligase (mshC).